The sequence spans 426 residues: Mannose-1-phosphate guanyltransferase alpha-B (426 aa).

The protein belongs to the transferase hexapeptide repeat family.

The catalysed reaction is alpha-D-mannose 1-phosphate + GTP + H(+) = GDP-alpha-D-mannose + diphosphate. It functions in the pathway nucleotide-sugar biosynthesis; GDP-alpha-D-mannose biosynthesis; GDP-alpha-D-mannose from alpha-D-mannose 1-phosphate (GTP route): step 1/1. This chain is Mannose-1-phosphate guanyltransferase alpha-B (gmppa-b), found in Xenopus laevis (African clawed frog).